Consider the following 303-residue polypeptide: E3 ubiquitin-protein ligase SINA-like 3 (303 aa).

The interval 1–30 is disordered; it reads MENITNNSERSLDRPKRQRPVSMENVGGTA. The RING-type zinc finger occupies 49–85; it reads CPICYHKLGAPIYQCDNGHIACSSCCKKVKYKCPYCS. An SBD region spans residues 99–286; it reads IVEAVVVSCP…MSIPYYLLDE (188 aa). An SIAH-type zinc finger spans residues 102–162; it reads AVVVSCPNAK…LYRHYHAEHK (61 aa). 8 residues coordinate Zn(2+): Cys-107, Cys-114, His-128, Cys-132, Cys-139, Cys-144, His-156, and His-161.

The protein belongs to the SINA (Seven in absentia) family.

It catalyses the reaction S-ubiquitinyl-[E2 ubiquitin-conjugating enzyme]-L-cysteine + [acceptor protein]-L-lysine = [E2 ubiquitin-conjugating enzyme]-L-cysteine + N(6)-ubiquitinyl-[acceptor protein]-L-lysine.. The protein operates within protein modification; protein ubiquitination. E3 ubiquitin-protein ligase that mediates ubiquitination and subsequent proteasomal degradation of target proteins. E3 ubiquitin ligases accept ubiquitin from an E2 ubiquitin-conjugating enzyme in the form of a thioester and then directly transfers the ubiquitin to targeted substrates. It probably triggers the ubiquitin-mediated degradation of different substrates. The polypeptide is E3 ubiquitin-protein ligase SINA-like 3 (Arabidopsis thaliana (Mouse-ear cress)).